The sequence spans 212 residues: Probable nicotinate-nucleotide adenylyltransferase (212 aa).

Belongs to the NadD family.

The enzyme catalyses nicotinate beta-D-ribonucleotide + ATP + H(+) = deamido-NAD(+) + diphosphate. It participates in cofactor biosynthesis; NAD(+) biosynthesis; deamido-NAD(+) from nicotinate D-ribonucleotide: step 1/1. In terms of biological role, catalyzes the reversible adenylation of nicotinate mononucleotide (NaMN) to nicotinic acid adenine dinucleotide (NaAD). The polypeptide is Probable nicotinate-nucleotide adenylyltransferase (Shewanella sp. (strain MR-4)).